The primary structure comprises 427 residues: Serine protease HTRA2, mitochondrial (427 aa).

The interval 33-57 (HTASSSKGSGGDNSKDQENNGQNKS) is disordered. Residues 67–87 (VFQFCVPFSLGALVSAVLIEG) form a helical membrane-spanning segment. The short motif at 78–81 (ALVS) is the IAP-binding element. The serine protease stretch occupies residues 144 to 307 (SNGSGFVIEQ…IPIDYVKVFL (164 aa)). Active-site charge relay system residues include histidine 162, aspartate 194, and serine 271. The 86-residue stretch at 330–415 (MGITMLTLTP…DLEIVILRGV (86 aa)) folds into the PDZ domain.

Belongs to the peptidase S1C family. Interacts with th/DIAP1 (via BIR 2 domain).

The protein resides in the mitochondrion intermembrane space. Its subcellular location is the mitochondrion membrane. The catalysed reaction is Cleavage of non-polar aliphatic amino-acids at the P1 position, with a preference for Val, Ile and Met. At the P2 and P3 positions, Arg is selected most strongly with a secondary preference for other hydrophilic residues.. Functionally, serine protease that shows proteolytic activity against a non-specific substrate beta-casein. Promotes or induces cell death either by direct binding to and inhibition of BIRC proteins (also called inhibitor of apoptosis proteins, IAPs), leading to an increase in caspase activity, or by a BIRC inhibition-independent, caspase-independent and serine protease activity-dependent mechanism. Can antagonize antiapoptotic activity of th/Diap1 by directly inducing the degradation of th/Diap1. The polypeptide is Serine protease HTRA2, mitochondrial (Drosophila persimilis (Fruit fly)).